The chain runs to 332 residues: D-2-hydroxyacid dehydrogenase (NAD(+)) (332 aa).

Catalysis depends on residues R237 and E266. Catalysis depends on H298, which acts as the Proton donor.

This sequence belongs to the D-isomer specific 2-hydroxyacid dehydrogenase family. Monomer.

It catalyses the reaction a (2R)-2-hydroxycarboxylate + NAD(+) = a 2-oxocarboxylate + NADH + H(+). The catalysed reaction is (2R)-hydroxy-4-methylpentanoate + NAD(+) = 4-methyl-2-oxopentanoate + NADH + H(+). The protein operates within amino-acid degradation; L-leucine degradation. Functionally, involved in the reductive branch of L-leucine fermentation. Catalyzes the NADH-dependent reduction of 4-methyl-2-oxopentanoate (2-oxoisocaproate) to (R)-2-hydroxy-4-methylpentanoate ((R)-2-hydroxyisocaproate). For the reverse reaction, the enzyme accepts (R)- but not (S)-2-hydroxy-4-methylpentanoate. Can also use 2-oxopentanoate, 2-oxohexanoate and phenylpyruvate but not 2-oxoisovalerate and 2-oxobutyrate. Cannot use NADPH. The sequence is that of D-2-hydroxyacid dehydrogenase (NAD(+)) from Clostridioides difficile (Peptoclostridium difficile).